Consider the following 321-residue polypeptide: Ornithine carbamoyltransferase (321 aa).

Carbamoyl phosphate is bound by residues 53-56 (STRT), glutamine 80, arginine 104, and 131-134 (HPCQ). Residues asparagine 166, aspartate 230, and 234 to 235 (SM) each bind L-ornithine. Carbamoyl phosphate contacts are provided by residues 270-271 (CL) and arginine 298.

Belongs to the aspartate/ornithine carbamoyltransferase superfamily. OTCase family.

Its subcellular location is the cytoplasm. It catalyses the reaction carbamoyl phosphate + L-ornithine = L-citrulline + phosphate + H(+). The protein operates within amino-acid degradation; L-arginine degradation via ADI pathway; carbamoyl phosphate from L-arginine: step 2/2. Functionally, reversibly catalyzes the transfer of the carbamoyl group from carbamoyl phosphate (CP) to the N(epsilon) atom of ornithine (ORN) to produce L-citrulline. In Bifidobacterium longum subsp. infantis (strain ATCC 15697 / DSM 20088 / JCM 1222 / NCTC 11817 / S12), this protein is Ornithine carbamoyltransferase.